A 305-amino-acid chain; its full sequence is Ribonuclease BN (305 aa).

Residues histidine 64, histidine 66, aspartate 68, histidine 69, histidine 141, aspartate 212, and histidine 270 each coordinate Zn(2+). The Proton acceptor role is filled by aspartate 68.

The protein belongs to the RNase Z family. RNase BN subfamily. In terms of assembly, homodimer. The cofactor is Zn(2+).

Its function is as follows. Zinc phosphodiesterase, which has both exoribonuclease and endoribonuclease activities. The sequence is that of Ribonuclease BN from Salmonella agona (strain SL483).